The chain runs to 120 residues: Large ribosomal subunit protein uL18 (120 aa).

Belongs to the universal ribosomal protein uL18 family. Part of the 50S ribosomal subunit; part of the 5S rRNA/L5/L18/L25 subcomplex. Contacts the 5S and 23S rRNAs.

This is one of the proteins that bind and probably mediate the attachment of the 5S RNA into the large ribosomal subunit, where it forms part of the central protuberance. The protein is Large ribosomal subunit protein uL18 of Hyphomonas neptunium (strain ATCC 15444).